The following is a 164-amino-acid chain: Large ribosomal subunit protein uL10 (164 aa).

Belongs to the universal ribosomal protein uL10 family. In terms of assembly, part of the ribosomal stalk of the 50S ribosomal subunit. The N-terminus interacts with L11 and the large rRNA to form the base of the stalk. The C-terminus forms an elongated spine to which L12 dimers bind in a sequential fashion forming a multimeric L10(L12)X complex.

Its function is as follows. Forms part of the ribosomal stalk, playing a central role in the interaction of the ribosome with GTP-bound translation factors. In Helicobacter pylori (strain P12), this protein is Large ribosomal subunit protein uL10.